A 664-amino-acid chain; its full sequence is MEGFMDSGTQTDAVVVLSLAQAAVLGLVSENELFGATISAEAFYPDLGPELSGAAMGEPEPPGPDVYQLACNGRALEEPAEEEVLEVEAACEKHTRRKTRPPVRLVPKVKFEKVEEEEQEVYEVSVPGDDKDAGPAEAPAEAASGGCDALVQSSAVKMIDLSAFSRKPRTLRHLPRTPRPELNVAPYDPHFPAPARDGFPEPSMALPGPEALPTECGFEPPHLAPLSDPEAPSMESPEPVKPEQGFVWQEASEFEADTAGSTVERHKKAQLDRLDINVQIDDSYLVEAGDRQKRWQCRMCEKSYTSKYNLVTHILGHNGIKPHSCPHCSKLFKQPSHLQTHLLTHQGTRPHKCQVCHKAFTQTSHLKRHMLLHSEVKPYSCHFCGRGFAYPSELKAHEVKHESGRCHVCVECGLDFSTLTQLKRHLASHQGPTLYQCLECDKSFHYRSQLQNHMLKHQNVRPFVCTECGMEFSQIHHLKQHSLTHKGVKEFKCEVCGREFTLQANMKRHMLIHTSVRPYQCHICFKTFVQKQTLKTHMIVHSPVKPFKCKVCGKSFNRMYNLLGHMHLHAGSKPFKCPYCSSKFNLKGNLSRHMKVKHGVMDIGLDSQDPMMELTGTDPSELDGQQEMEDFEENAYSYASVDSSAEASVLTEQAMKEMAYYNVL.

Residues lysine 110 and lysine 113 each participate in a glycyl lysine isopeptide (Lys-Gly) (interchain with G-Cter in SUMO2) cross-link. A disordered region spans residues 121-141; that stretch reads VYEVSVPGDDKDAGPAEAPAE. C2H2-type zinc fingers lie at residues 295 to 317, 323 to 345, and 351 to 373; these read WQCR…ILGH, HSCP…LLTH, and HKCQ…MLLH. Lysine 377 is covalently cross-linked (Glycyl lysine isopeptide (Lys-Gly) (interchain with G-Cter in SUMO2)). C2H2-type zinc fingers lie at residues 379-401, 407-429, 435-457, 463-485, 491-513, 519-541, 547-569, and 575-598; these read YSCH…EVKH, HVCV…LASH, YQCL…MLKH, FVCT…SLTH, FKCE…MLIH, YQCH…MIVH, FKCK…MHLH, and FKCP…KVKH.

This sequence belongs to the krueppel C2H2-type zinc-finger protein family.

The protein resides in the nucleus. May be involved in transcriptional regulation. The protein is Zinc finger protein 710 (ZNF710) of Homo sapiens (Human).